Here is a 425-residue protein sequence, read N- to C-terminus: Paired box pox-neuro protein (425 aa).

Positions 5-132 (GQAGVNQLGG…SSINRILRNS (128 aa)) form a DNA-binding region, paired. Positions 8-64 (GVNQLGGVFVNGRPLPDCVRRRIVDLALCGVRPCDISRQLLVSHGCVSKILTRFYET) are PAI subdomain. The tract at residues 84–132 (TVVKKIIRLKEENSGMFAWEIREQLQQQRVCDPSSVPSISSINRILRNS) is RED subdomain. Disordered regions lie at residues 159 to 188 (QAGS…AATP), 297 to 358 (TKSE…RKRN), and 383 to 425 (LESS…EVVN). Positions 172 to 185 (APPPPVTVAPPTPA) are enriched in pro residues. Composition is skewed to low complexity over residues 323–332 (SSPAALSLTA) and 340–349 (GSAPEASPGS). Residues 402-425 (TPEDEDPAEAEEEQEEEDSVEVVN) are compositionally biased toward acidic residues.

Central and peripheral nervous systems.

Its subcellular location is the nucleus. Transcriptional regulator that specifies poly-innervated organs (chemosensory bristle). Also controls the number of neurons. The protein is Paired box pox-neuro protein (Poxn) of Drosophila melanogaster (Fruit fly).